The following is a 715-amino-acid chain: Probable serine/threonine-protein kinase mkcE (715 aa).

Disordered stretches follow at residues 1 to 125 (MQKI…SQHQ), 228 to 330 (QLQQ…TTTT), and 366 to 385 (GVDN…PIQP). The segment covering 42-53 (YDGGGSGSGSGG) has biased composition (gly residues). Composition is skewed to low complexity over residues 54–70 (SSSN…TGGN) and 80–125 (SPSN…SQHQ). A coiled-coil region spans residues 207-241 (TGKKNFQQQQLQQLQQQQQQQQLQQQQHQQHNHQI). Residues 367–378 (VDNLSSTTTSLS) are compositionally biased toward low complexity. One can recognise a Protein kinase domain in the interval 427–683 (RIGENAEVKG…PTQLLQHPFI (257 aa)). Residues 433 to 441 (EVKGAFGTV) and K459 contribute to the ATP site. Residue D550 is the Proton acceptor of the active site.

Belongs to the protein kinase superfamily. STE Ser/Thr protein kinase family. STE20 subfamily. Requires Mg(2+) as cofactor.

It catalyses the reaction L-seryl-[protein] + ATP = O-phospho-L-seryl-[protein] + ADP + H(+). The enzyme catalyses L-threonyl-[protein] + ATP = O-phospho-L-threonyl-[protein] + ADP + H(+). This chain is Probable serine/threonine-protein kinase mkcE, found in Dictyostelium discoideum (Social amoeba).